Here is a 215-residue protein sequence, read N- to C-terminus: Adenylate kinase (215 aa).

Residue glycine 10 to threonine 15 participates in ATP binding. The segment at serine 30–valine 59 is NMP. Residues threonine 31, arginine 36, glutamate 57–valine 59, glycine 86–arginine 89, and glutamine 93 each bind AMP. An LID region spans residues glycine 127–aspartate 165. Arginine 128 lines the ATP pocket. Zn(2+)-binding residues include cysteine 131 and cysteine 134. An ATP-binding site is contributed by threonine 137–tyrosine 138. Positions 151 and 154 each coordinate Zn(2+). AMP-binding residues include arginine 162 and arginine 173. Glutamine 201 contributes to the ATP binding site.

The protein belongs to the adenylate kinase family. As to quaternary structure, monomer.

Its subcellular location is the cytoplasm. The enzyme catalyses AMP + ATP = 2 ADP. Its pathway is purine metabolism; AMP biosynthesis via salvage pathway; AMP from ADP: step 1/1. Functionally, catalyzes the reversible transfer of the terminal phosphate group between ATP and AMP. Plays an important role in cellular energy homeostasis and in adenine nucleotide metabolism. In Lactococcus lactis subsp. lactis (strain IL1403) (Streptococcus lactis), this protein is Adenylate kinase.